Reading from the N-terminus, the 310-residue chain is Putative S-adenosyl-L-methionine-dependent methyltransferase MUL_4762 (310 aa).

S-adenosyl-L-methionine-binding positions include Asp132 and 161 to 162 (DL).

This sequence belongs to the UPF0677 family.

Exhibits S-adenosyl-L-methionine-dependent methyltransferase activity. This Mycobacterium ulcerans (strain Agy99) protein is Putative S-adenosyl-L-methionine-dependent methyltransferase MUL_4762.